The sequence spans 957 residues: Melanoma-associated antigen E1 (957 aa).

The segment at 1–433 (MSLVSQNSRR…RNPSKCSIVL (433 aa)) is disordered. Composition is skewed to polar residues over residues 85-96 (SEASSASGQPTV) and 104-130 (LLAT…SVTL). The span at 138–156 (TSRPPTSSEEPSTSVPATP) shows a compositional bias: low complexity. Polar residues-rich tracts occupy residues 158–177 (EGTS…TSVV), 220–232 (LSTS…TEGL), 256–306 (RSTT…GPST), 328–344 (LSTS…STSV), 364–380 (RSTS…DTSV), and 414–428 (TLFS…NPSK). MAGE domains lie at 491-690 (MEQN…YNEA) and 745-936 (LESK…YREA). The interval 743 to 957 (SRLESKARKL…HRQFFVHNFR (215 aa)) is interaction with DTNA.

In terms of assembly, interacts with DTNA. Interacts with TRIM28.

Its subcellular location is the cytoplasm. It is found in the perinuclear region. The protein localises to the nucleus. The protein resides in the cell membrane. Its function is as follows. May enhance ubiquitin ligase activity of RING-type zinc finger-containing E3 ubiquitin-protein ligases. Proposed to act through recruitment and/or stabilization of the Ubl-conjugating enzyme (E2) at the E3:substrate complex. This is Melanoma-associated antigen E1 (MAGEE1) from Macaca fascicularis (Crab-eating macaque).